A 421-amino-acid chain; its full sequence is Elongation factor 1-alpha (421 aa).

The region spanning 4 to 220 is the tr-type G domain; the sequence is NRHQNLAVIG…NGLPVPQPPT (217 aa). The interval 13–20 is G1; sequence GHVDHGKS. 13–20 provides a ligand contact to GTP; the sequence is GHVDHGKS. Serine 20 provides a ligand contact to Mg(2+). The interval 69–73 is G2; that stretch reads GVTID. Residues 90–93 form a G3 region; that stretch reads DCPG. Residues 90-94 and 145-148 each bind GTP; these read DCPGH and NKMD. The segment at 145–148 is G4; it reads NKMD. Residues 184 to 186 form a G5 region; the sequence is SAF.

The protein belongs to the TRAFAC class translation factor GTPase superfamily. Classic translation factor GTPase family. EF-Tu/EF-1A subfamily.

Its subcellular location is the cytoplasm. The enzyme catalyses GTP + H2O = GDP + phosphate + H(+). Its function is as follows. GTP hydrolase that promotes the GTP-dependent binding of aminoacyl-tRNA to the A-site of ribosomes during protein biosynthesis. This is Elongation factor 1-alpha from Halobacterium salinarum (strain ATCC 700922 / JCM 11081 / NRC-1) (Halobacterium halobium).